A 276-amino-acid polypeptide reads, in one-letter code: Tryptophan synthase alpha chain (276 aa).

Catalysis depends on proton acceptor residues glutamate 55 and aspartate 66.

Belongs to the TrpA family. In terms of assembly, tetramer of two alpha and two beta chains.

It carries out the reaction (1S,2R)-1-C-(indol-3-yl)glycerol 3-phosphate + L-serine = D-glyceraldehyde 3-phosphate + L-tryptophan + H2O. The protein operates within amino-acid biosynthesis; L-tryptophan biosynthesis; L-tryptophan from chorismate: step 5/5. Functionally, the alpha subunit is responsible for the aldol cleavage of indoleglycerol phosphate to indole and glyceraldehyde 3-phosphate. This chain is Tryptophan synthase alpha chain, found in Gloeobacter violaceus (strain ATCC 29082 / PCC 7421).